The following is a 147-amino-acid chain: Protein disulfide isomerase-like 5-1 (147 aa).

A signal peptide spans 1–29; that stretch reads MDLAPGRRARLLVALALVVLVALAARSGA. One can recognise a Thioredoxin domain in the interval 30–137; the sequence is EVITLTEETF…LKNFVSDEAE (108 aa). Catalysis depends on nucleophile residues cysteine 59 and cysteine 62. Residues cysteine 59 and cysteine 62 are joined by a disulfide bond.

The protein belongs to the protein disulfide isomerase family.

Acts as a protein-folding catalyst that interacts with nascent polypeptides to catalyze the formation, isomerization, and reduction or oxidation of disulfide bonds. May play a role in storage protein biogenesis. In Oryza sativa subsp. japonica (Rice), this protein is Protein disulfide isomerase-like 5-1 (PDIL5-1).